The sequence spans 138 residues: uncharacterized protein (138 aa).

This is an uncharacterized protein from Acanthamoeba polyphaga mimivirus (APMV).